A 118-amino-acid polypeptide reads, in one-letter code: Non-specific lipid-transfer protein 3 (118 aa).

Residues 1–25 form the signal peptide; that stretch reads MARSMNLACVALVMCMVVIAPMAEA. Intrachain disulfides connect cysteine 29–cysteine 76, cysteine 39–cysteine 53, cysteine 54–cysteine 99, and cysteine 74–cysteine 113.

The protein belongs to the plant LTP family.

Its function is as follows. Plant non-specific lipid-transfer proteins transfer phospholipids as well as galactolipids across membranes. May play a role in wax or cutin deposition in the cell walls of expanding epidermal cells and certain secretory tissues. The polypeptide is Non-specific lipid-transfer protein 3 (Lens culinaris (Lentil)).